The chain runs to 403 residues: F-box protein At2g40925 (403 aa).

One can recognise an F-box domain in the interval 21–71 (NRHDCEIPPDLMIEILIRLPTKSFMRFKCVSKQWSPLISGRYFCNRLFTCV).

The polypeptide is F-box protein At2g40925 (Arabidopsis thaliana (Mouse-ear cress)).